The sequence spans 325 residues: tRNA U34 carboxymethyltransferase (325 aa).

Carboxy-S-adenosyl-L-methionine-binding positions include lysine 91, tryptophan 105, lysine 110, glycine 130, 152–154, methionine 196, tyrosine 200, and arginine 315; that span reads DPS.

This sequence belongs to the class I-like SAM-binding methyltransferase superfamily. CmoB family. In terms of assembly, homotetramer.

The catalysed reaction is carboxy-S-adenosyl-L-methionine + 5-hydroxyuridine(34) in tRNA = 5-carboxymethoxyuridine(34) in tRNA + S-adenosyl-L-homocysteine + H(+). Its function is as follows. Catalyzes carboxymethyl transfer from carboxy-S-adenosyl-L-methionine (Cx-SAM) to 5-hydroxyuridine (ho5U) to form 5-carboxymethoxyuridine (cmo5U) at position 34 in tRNAs. The sequence is that of tRNA U34 carboxymethyltransferase from Aeromonas hydrophila subsp. hydrophila (strain ATCC 7966 / DSM 30187 / BCRC 13018 / CCUG 14551 / JCM 1027 / KCTC 2358 / NCIMB 9240 / NCTC 8049).